Reading from the N-terminus, the 372-residue chain is Cobalt-precorrin-5B C(1)-methyltransferase (372 aa).

Belongs to the CbiD family.

It carries out the reaction Co-precorrin-5B + S-adenosyl-L-methionine = Co-precorrin-6A + S-adenosyl-L-homocysteine. It functions in the pathway cofactor biosynthesis; adenosylcobalamin biosynthesis; cob(II)yrinate a,c-diamide from sirohydrochlorin (anaerobic route): step 6/10. Its function is as follows. Catalyzes the methylation of C-1 in cobalt-precorrin-5B to form cobalt-precorrin-6A. This Geobacillus thermodenitrificans (strain NG80-2) protein is Cobalt-precorrin-5B C(1)-methyltransferase.